The following is a 433-amino-acid chain: 26S proteasome regulatory subunit 7 (433 aa).

Residues Met1 to Ile22 form a disordered region. The segment covering Asp8 to Ile22 has biased composition (basic and acidic residues). Lys116 bears the N6-acetyllysine mark. Gly216 to Thr223 contributes to the ATP binding site. Lys422 bears the N6-acetyllysine mark.

This sequence belongs to the AAA ATPase family. As to quaternary structure, component of the 19S proteasome regulatory particle complex. The 26S proteasome consists of a 20S core particle (CP) and two 19S regulatory subunits (RP). The regulatory particle is made of a lid composed of 9 subunits, a base containing 6 ATPases including PSMC2 and few additional components. Interacts with NDC80 and SQSTM1. Interacts with PAAF1. Interacts with TRIM5. In terms of processing, monoubiquitinated by RNF181. Phosphorylated. Dephosphorylated by UBLCP1 which impairs PSMC2 ATPase activity and disrupts 26S proteasome assembly.

It is found in the cytoplasm. In terms of biological role, component of the 26S proteasome, a multiprotein complex involved in the ATP-dependent degradation of ubiquitinated proteins. This complex plays a key role in the maintenance of protein homeostasis by removing misfolded or damaged proteins, which could impair cellular functions, and by removing proteins whose functions are no longer required. Therefore, the proteasome participates in numerous cellular processes, including cell cycle progression, apoptosis, or DNA damage repair. PSMC2 belongs to the heterohexameric ring of AAA (ATPases associated with diverse cellular activities) proteins that unfolds ubiquitinated target proteins that are concurrently translocated into a proteolytic chamber and degraded into peptides. This Rattus norvegicus (Rat) protein is 26S proteasome regulatory subunit 7 (Psmc2).